The following is a 573-amino-acid chain: Urease subunit alpha 2 (573 aa).

Residues 135-573 (GGMDTHVHYI…ISLNQLYFFS (439 aa)) form the Urease domain. 3 residues coordinate Ni(2+): His140, His142, and Lys223. Lys223 is modified (N6-carboxylysine). Residue His225 coordinates substrate. Ni(2+)-binding residues include His252 and His278. His326 (proton donor) is an active-site residue. Asp366 provides a ligand contact to Ni(2+).

The protein belongs to the metallo-dependent hydrolases superfamily. Urease alpha subunit family. In terms of assembly, heterotrimer of UreA (gamma), UreB (beta) and UreC (alpha) subunits. Three heterotrimers associate to form the active enzyme. Requires Ni cation as cofactor. Carboxylation allows a single lysine to coordinate two nickel ions.

Its subcellular location is the cytoplasm. It carries out the reaction urea + 2 H2O + H(+) = hydrogencarbonate + 2 NH4(+). The protein operates within nitrogen metabolism; urea degradation; CO(2) and NH(3) from urea (urease route): step 1/1. Its function is as follows. Disrupting the ure2 operon has no effect on urease activity, or pathogen survival in BALB/c mice when inoculated by gavage, but confers slightly enhanced resistance to low pH killing in vitro. The chain is Urease subunit alpha 2 from Brucella suis biovar 1 (strain 1330).